We begin with the raw amino-acid sequence, 660 residues long: Septation initiation protein sid4 (660 aa).

Disordered stretches follow at residues 79 to 243 (TKKE…QQHF), 368 to 396 (STTV…PDTK), and 459 to 503 (RHTS…PAKN). Composition is skewed to polar residues over residues 125-138 (SFNS…STPY), 156-176 (SNSP…QSPK), and 222-243 (RPNQ…QQHF). A compositionally biased stretch (basic and acidic residues) spans 384–396 (STKDFKEQKPDTK). Polar residues-rich tracts occupy residues 459-480 (RHTS…ITTK) and 488-497 (KENTMLNDGS).

As to quaternary structure, homodimer. Interacts with cdc11, sad1, plo1 and dma1.

Its subcellular location is the cytoplasm. The protein localises to the cytoskeleton. It is found in the microtubule organizing center. It localises to the spindle pole body. Its function is as follows. Required for activation of the spg1 GTPase signaling cascade which leads to the initiation of septation and the subsequent termination of mitosis. May act as a scaffold at the spindle pole body to which other components of the spg1 signaling cascade attach. This chain is Septation initiation protein sid4 (sid4), found in Schizosaccharomyces pombe (strain 972 / ATCC 24843) (Fission yeast).